The chain runs to 378 residues: Polar flagellin B/D (378 aa).

Coiled-coil stretches lie at residues 103-128 (SNSK…RIAE) and 311-340 (AFQN…IKDT).

The protein belongs to the bacterial flagellin family. In terms of assembly, heteromer of multiple flagellin subunits including FlaA, FlaB/D, FlaC, FlaE and FlaF.

Its subcellular location is the secreted. The protein resides in the bacterial flagellum. Functionally, flagellin is the subunit protein which polymerizes to form the filaments of bacterial flagella. FlaB/D is not essential for polar flagellar synthesis and swimming motility. Homomer of FlaB/D is not able to form a functional filament. The sequence is that of Polar flagellin B/D (flaB) from Vibrio parahaemolyticus serotype O3:K6 (strain RIMD 2210633).